A 364-amino-acid chain; its full sequence is Fructose-bisphosphate aldolase B (364 aa).

Alanine 2 carries the N-acetylalanine modification. Lysine 13 is modified (N6-succinyllysine). Serine 36 is modified (phosphoserine). A Phosphothreonine modification is found at threonine 39. Arginine 43 serves as a coordination point for beta-D-fructose 1,6-bisphosphate. The residue at position 119 (threonine 119) is a Phosphothreonine. N6-succinyllysine is present on lysine 121. Serine 132 bears the Phosphoserine mark. The active-site Proton acceptor is glutamate 188. The active-site Schiff-base intermediate with dihydroxyacetone-P is the lysine 230. Residues serine 272, serine 276, serine 299, and serine 301 each carry the phosphoserine modification. Residue 272-274 participates in beta-D-fructose 1,6-bisphosphate binding; sequence SGG. Position 304 (arginine 304) interacts with beta-D-fructose 1,6-bisphosphate. At serine 309 the chain carries Phosphoserine. Position 317 is an N6-succinyllysine (lysine 317).

Belongs to the class I fructose-bisphosphate aldolase family. As to quaternary structure, homotetramer. Interacts with BBS1, BBS2, BBS4 and BBS7. Forms a ternary complex with G6PD and TP53; this interaction is direct.

It is found in the cytoplasm. The protein localises to the cytosol. It localises to the cytoskeleton. Its subcellular location is the microtubule organizing center. The protein resides in the centrosome. It is found in the centriolar satellite. It catalyses the reaction beta-D-fructose 1,6-bisphosphate = D-glyceraldehyde 3-phosphate + dihydroxyacetone phosphate. The enzyme catalyses beta-D-fructose 1-phosphate = D-glyceraldehyde + dihydroxyacetone phosphate. It functions in the pathway carbohydrate degradation; glycolysis; D-glyceraldehyde 3-phosphate and glycerone phosphate from D-glucose: step 4/4. Its pathway is carbohydrate biosynthesis; gluconeogenesis. It participates in carbohydrate metabolism; fructose metabolism. Catalyzes the aldol cleavage of fructose 1,6-biphosphate to form two triosephosphates dihydroxyacetone phosphate and D-glyceraldehyde 3-phosphate in glycolysis as well as the reverse stereospecific aldol addition reaction in gluconeogenesis. In fructolysis, metabolizes fructose 1-phosphate derived from the phosphorylation of dietary fructose by fructokinase into dihydroxyacetone phosphate and D-glyceraldehyde. Acts as an adapter independently of its enzymatic activity, exerts a tumor suppressor role by stabilizing the ternary complex with G6PD and TP53 to inhibit G6PD activity and keep oxidative pentose phosphate metabolism in check. This is Fructose-bisphosphate aldolase B (ALDOB) from Ovis aries (Sheep).